Reading from the N-terminus, the 249-residue chain is Eukaryotic translation initiation factor 6 (249 aa).

The protein belongs to the eIF-6 family. In terms of assembly, monomer. Associates with the 60S ribosomal subunit.

Its subcellular location is the cytoplasm. The protein resides in the nucleus. The protein localises to the nucleolus. In terms of biological role, binds to the 60S ribosomal subunit and prevents its association with the 40S ribosomal subunit to form the 80S initiation complex in the cytoplasm. May also be involved in ribosome biogenesis. This is Eukaryotic translation initiation factor 6 from Babesia bovis.